The primary structure comprises 610 residues: Glutamine--fructose-6-phosphate aminotransferase [isomerizing] (610 aa).

Cys-2 acts as the Nucleophile; for GATase activity in catalysis. One can recognise a Glutamine amidotransferase type-2 domain in the interval 2-218 (CGIVGAVAQR…EGDIAEITRR (217 aa)). SIS domains lie at 278–426 (IVDS…VKGH) and 459–600 (LAED…VDQP). The For Fru-6P isomerization activity role is filled by Lys-605.

In terms of assembly, homodimer.

It is found in the cytoplasm. The catalysed reaction is D-fructose 6-phosphate + L-glutamine = D-glucosamine 6-phosphate + L-glutamate. Catalyzes the first step in hexosamine metabolism, converting fructose-6P into glucosamine-6P using glutamine as a nitrogen source. In Haemophilus influenzae (strain ATCC 51907 / DSM 11121 / KW20 / Rd), this protein is Glutamine--fructose-6-phosphate aminotransferase [isomerizing].